Here is a 200-residue protein sequence, read N- to C-terminus: ATP-dependent Clp protease proteolytic subunit 2 (200 aa).

Serine 99 (nucleophile) is an active-site residue. The active site involves histidine 124.

The protein belongs to the peptidase S14 family. In terms of assembly, fourteen ClpP subunits assemble into 2 heptameric rings which stack back to back to give a disk-like structure with a central cavity, resembling the structure of eukaryotic proteasomes.

The protein localises to the cytoplasm. The enzyme catalyses Hydrolysis of proteins to small peptides in the presence of ATP and magnesium. alpha-casein is the usual test substrate. In the absence of ATP, only oligopeptides shorter than five residues are hydrolyzed (such as succinyl-Leu-Tyr-|-NHMec, and Leu-Tyr-Leu-|-Tyr-Trp, in which cleavage of the -Tyr-|-Leu- and -Tyr-|-Trp bonds also occurs).. In terms of biological role, cleaves peptides in various proteins in a process that requires ATP hydrolysis. Has a chymotrypsin-like activity. Plays a major role in the degradation of misfolded proteins. This is ATP-dependent Clp protease proteolytic subunit 2 from Treponema denticola (strain ATCC 35405 / DSM 14222 / CIP 103919 / JCM 8153 / KCTC 15104).